Reading from the N-terminus, the 309-residue chain is Aspartate carbamoyltransferase catalytic subunit (309 aa).

Residues R57 and T58 each coordinate carbamoyl phosphate. L-aspartate is bound at residue K86. Residues R107, H135, and Q138 each coordinate carbamoyl phosphate. Positions 168 and 228 each coordinate L-aspartate. Carbamoyl phosphate contacts are provided by L267 and P268.

This sequence belongs to the aspartate/ornithine carbamoyltransferase superfamily. ATCase family. Heterooligomer of catalytic and regulatory chains.

The enzyme catalyses carbamoyl phosphate + L-aspartate = N-carbamoyl-L-aspartate + phosphate + H(+). It participates in pyrimidine metabolism; UMP biosynthesis via de novo pathway; (S)-dihydroorotate from bicarbonate: step 2/3. In terms of biological role, catalyzes the condensation of carbamoyl phosphate and aspartate to form carbamoyl aspartate and inorganic phosphate, the committed step in the de novo pyrimidine nucleotide biosynthesis pathway. The sequence is that of Aspartate carbamoyltransferase catalytic subunit from Nitrosopumilus maritimus (strain SCM1).